The sequence spans 143 residues: RVFHLFDYPPLNTGDLQLKAKIKPFIFTSNNSFLSYNDVTVKHNDVPAGDPFKASAVIKDTNPNPYIAAGVTAILNDVLGRFAVPLMNDLKTGKTDGWDLMMKYDKHSTRSYMALAYTPSDHLNLPKKPLPTDVINWLETFDK.

This sequence belongs to the flavin monoamine oxidase family. The cofactor is FAD.

The enzyme catalyses an L-alpha-amino acid + O2 + H2O = a 2-oxocarboxylate + H2O2 + NH4(+). Functionally, cytotoxic L-amino acid oxidase with high oxidase activity towards DL-methionine and L-methionine, L-phenylalanine, DL-norleucine, L-isoleucine, L-arginine, L-tyrosine, and DL-leucine. Shows relatively low activity towards DL-lysine and L-lysine, DL-asparagine, DL-valine, L-histidine, DL-threonine, DL-tryptophan, and L-glutamic acid; and no activity towards L-cysteine, L-glycine, L-proline, L-oxyproline, DL-serine, and DL-aspartic acid. Does not use benzylamine, ethanolamine, diethylamine, meta- and para-phenylendiamine, ortho-, meta- and para-aminophenols, or putrescin as a substrate. Acts as a toxin by inducing chromatin condensation, as well as DNA and nucleus fragmentation, which are typical for apoptosis. Probably induces cell damage indirectly via the generation of free radicals and oxidant agents that can trigger cell impairment and apoptosis by a caspase-independent pathway. The polypeptide is Cytotoxic L-amino-acid oxidase (Amanita phalloides (Death cap)).